The chain runs to 2281 residues: Retinal-specific phospholipid-transporting ATPase ABCA4 (2281 aa).

The Cytoplasmic segment spans residues 1–24; sequence MGFARQIKLLLWKNWTLRKRQKIR. The helical transmembrane segment at 25 to 45 threads the bilayer; the sequence is FVVELVWPLSLFLVLIWLRNV. Residues 46–646 lie on the Extracellular side of the membrane; it reads NPLYSKHECH…MPYPCFVDDS (601 aa). Intrachain disulfides connect C54-C81 and C75-C324. N98 carries an N-linked (GlcNAc...) asparagine glycan. Mg(2+) is bound by residues S336 and N338. C370 and C519 are oxidised to a cystine. N415 and N504 each carry an N-linked (Hex...) asparagine glycan. Residues R587 and R653 each contribute to the an N-all-trans-retinylidenephosphatidylethanolamine site. Cystine bridges form between C641–C1488, C1442–C1453, and C1486–C1500. The chain crosses the membrane as a helical span at residues 647–667; that stretch reads FMIILNRCFPIFMVLAWIYSV. Topologically, residues 668–699 are cytoplasmic; that stretch reads SMTVKSIVLEKELRLKETLKNQGVSNRVIWCT. A helical membrane pass occupies residues 700–720; that stretch reads WFLDSFSIMSMSICLLTIFIM. Over 721–730 the chain is Extracellular; the sequence is HGRILHYSNP. Residues 731–751 traverse the membrane as a helical segment; the sequence is FILFLFLLAFSIATIMQCFLL. Residues 752–759 lie on the Cytoplasmic side of the membrane; the sequence is STFFSRAS. A helical transmembrane segment spans residues 760-780; that stretch reads LAAACSGVIYFTLYLPHILCF. Topologically, residues 781 to 835 are extracellular; it reads AWQDRITADMKMAVSLLSPVAFGFGTEYLARFEEQGVGLQWSNIGNSPMEGDEFS. A helical transmembrane segment spans residues 836 to 856; that stretch reads FLMSMKMMLLDAALYGLLAWY. Residues 857–1374 lie on the Cytoplasmic side of the membrane; sequence LDQVFPGDYG…IRSHKDFLAQ (518 aa). Residue T901 is modified to Phosphothreonine. In terms of domain architecture, ABC transporter 1 spans 929–1160; it reads VCVKNLVKIF…FGTGFYLTLV (232 aa). The ATP site is built by F938, G966, and K969. T970 is a binding site for Mg(2+). The ATP site is built by T971, Q1010, K1054, G1064, G1065, and H1118. S1185 is subject to Phosphoserine. A disordered region spans residues 1295–1340; sequence ENINLRHPCSGPSEKAGQTPQGSSSHPREPAAHPEGQPPPEREGHS. Residues 1310–1319 show a composition bias toward polar residues; sequence AGQTPQGSSS. T1313 carries the phosphothreonine modification. 2 positions are modified to phosphoserine: S1317 and S1319. The chain crosses the membrane as a helical span at residues 1375–1395; that stretch reads IVLPATFVFLALMLSLIIPPF. The Extracellular segment spans residues 1396 to 1679; the sequence is GEYPALTLHP…TVLTTSVDAV (284 aa). N1455 carries N-linked (Hex...) asparagine glycosylation. A glycan (N-linked (Hex...) asparagine) is linked at N1527. N1586 carries N-linked (GlcNAc...) asparagine glycosylation. N1660 is a glycosylation site (N-linked (Hex...) asparagine). A helical transmembrane segment spans residues 1680-1700; that stretch reads VAICVIFAMSFVPASFVLYLI. Topologically, residues 1701–1725 are cytoplasmic; sequence QERVNKAKHLQFVSGVSPTTYWLTN. A helical membrane pass occupies residues 1726–1746; that stretch reads FLWDIMNYTVSAALVVGIFIG. The Extracellular portion of the chain corresponds to 1747–1757; that stretch reads FQKKAYTSSEN. Residues 1758 to 1778 form a helical membrane-spanning segment; that stretch reads LPALVALLMLYGWAVIPMMYP. Topologically, residues 1779 to 1790 are cytoplasmic; sequence ASFLFDIPSTAY. Residues 1791 to 1811 traverse the membrane as a helical segment; the sequence is VALSCANLFIGINSSAITFVL. Residues 1812 to 1829 lie on the Extracellular side of the membrane; that stretch reads ELFENNRTLLRINAMLRK. An N-linked (GlcNAc...) asparagine glycan is attached at N1817. The chain crosses the membrane as a helical span at residues 1830–1850; it reads LLIIFPHFCLGRGLIDLALSQ. Residues 1851-1879 lie on the Cytoplasmic side of the membrane; it reads AVTDVYARFGEEHSSNPFQWDLIGKNLAA. The helical transmembrane segment at 1880–1900 threads the bilayer; that stretch reads MAVEGVVYFLLTLLIQYQFFF. The Extracellular segment spans residues 1901–2281; it reads SRWTTEPAKE…VDKGNSAPQG (381 aa). N1931 carries N-linked (GlcNAc...) asparagine glycosylation. An ABC transporter 2 domain is found at 1936-2168; that stretch reads LRLNELTKVY…FGDGYIVTMK (233 aa). 5 residues coordinate ATP: N1972, G1973, K1976, T1977, and T1978. T1977 lines the Mg(2+) pocket. Residues N2004 and N2050 are each glycosylated (N-linked (GlcNAc...) asparagine). Residue G2071 coordinates ATP. Residues 2242-2247 form an essential for ATP binding and ATPase activity region; that stretch reads VFVNFA. N-linked (GlcNAc...) asparagine glycosylation occurs at N2251. The interval 2262 to 2281 is disordered; it reads AAGASRQAKEVDKGNSAPQG.

N-glycosylated. In terms of processing, proteolytic cleavage by trypsin leads to a 120-kDa N-terminal fragment and a 115-kDa C-terminal fragment that are linked through disulfide bonds. Post-translationally, phosphorylation is independent of light exposure and modulates ATPase activity. As to expression, expressed in retina namely in the periphery and incisures of the rod outer segments (ROS).

The protein localises to the membrane. It is found in the cell projection. It localises to the cilium. Its subcellular location is the photoreceptor outer segment. The protein resides in the cytoplasmic vesicle. The protein localises to the endoplasmic reticulum. The enzyme catalyses ATP + H2O + phospholipidSide 1 = ADP + phosphate + phospholipidSide 2.. The catalysed reaction is an N-all-trans-retinylidenephosphatidylethanolamine(out) + ATP + H2O = an N-all-trans-retinylidenephosphatidylethanolamine(in) + ADP + phosphate + H(+). It carries out the reaction a 1,2-diacyl-sn-glycero-3-phosphoethanolamine(out) + ATP + H2O = a 1,2-diacyl-sn-glycero-3-phosphoethanolamine(in) + ADP + phosphate + H(+). It catalyses the reaction N-11-cis-retinylidenephosphatidylethanolamine(out) + ATP + H2O = N-11-cis-retinylidenephosphatidylethanolamine(in) + ADP + phosphate + H(+). The enzyme catalyses ATP + H2O = ADP + phosphate + H(+). With respect to regulation, all-trans-retinal transport activity is reduced by EDTA chelation of Mg2+. All-trans-retinal transport activity is inhibited by N-ethylmaleimide (NEM). Phosphatidylethanolamine transport is strongly inhibited by beryllium fluoride and NEM. Its function is as follows. Flippase that catalyzes in an ATP-dependent manner the transport of retinal-phosphatidylethanolamine conjugates like the 11-cis and all-trans isomers of N-retinylidene-phosphatidylethanolamine from the lumen to the cytoplasmic leaflet of photoreceptor outer segment disk membranes, where N-cis-retinylidene-phosphatidylethanolamine (N-cis-R-PE) is then isomerized to its all-trans isomer (N-trans-R-PE) and reduced by RDH8 to produce all-trans-retinol (all-trans-rol) and therefore prevents the accumulation of excess of 11-cis-retinal and its schiff-base conjugate and the formation of toxic bisretinoid. Displays both ATPase and GTPase activity that is strongly influenced by the lipid environment and the presence of retinoid compounds. Binds the unprotonated form of N-retinylidene-phosphatidylethanolamine with high affinity in the absence of ATP and ATP binding and hydrolysis induce a protein conformational change that causes the dissociation of N-retinylidene-phosphatidylethanolamine. The polypeptide is Retinal-specific phospholipid-transporting ATPase ABCA4 (Bos taurus (Bovine)).